The sequence spans 734 residues: Homoaconitase, mitochondrial (734 aa).

The transit peptide at 1 to 25 (MGASNLLRFGAVTRISTPLLSRRSL) directs the protein to the mitochondrion. 3 residues coordinate [4Fe-4S] cluster: cysteine 367, cysteine 427, and cysteine 430.

The protein belongs to the aconitase/IPM isomerase family. [4Fe-4S] cluster serves as cofactor.

Its subcellular location is the mitochondrion. The enzyme catalyses (2R,3S)-homoisocitrate = cis-homoaconitate + H2O. Its pathway is amino-acid biosynthesis; L-lysine biosynthesis via AAA pathway; L-alpha-aminoadipate from 2-oxoglutarate: step 3/5. Functionally, catalyzes the reversible hydration of cis-homoaconitate to (2R,3S)-homoisocitrate, a step in the alpha-aminoadipate pathway for lysine biosynthesis. The protein is Homoaconitase, mitochondrial (LYS4) of Mycosarcoma maydis (Corn smut fungus).